We begin with the raw amino-acid sequence, 452 residues long: tRNA modification GTPase MnmE (452 aa).

(6S)-5-formyl-5,6,7,8-tetrahydrofolate-binding residues include R23, E81, and K120. The TrmE-type G domain maps to 217–373; the sequence is GIKTAIIGQT…LVLRINQMYL (157 aa). Residue N227 coordinates K(+). GTP is bound by residues 227-232, 246-252, and 271-274; these read NVGKSS, TDIPGTT, and DTAG. Position 231 (S231) interacts with Mg(2+). Residues T246, I248, and T251 each coordinate K(+). T252 contacts Mg(2+). Residue K452 coordinates (6S)-5-formyl-5,6,7,8-tetrahydrofolate.

It belongs to the TRAFAC class TrmE-Era-EngA-EngB-Septin-like GTPase superfamily. TrmE GTPase family. As to quaternary structure, homodimer. Heterotetramer of two MnmE and two MnmG subunits. K(+) is required as a cofactor.

It localises to the cytoplasm. Its function is as follows. Exhibits a very high intrinsic GTPase hydrolysis rate. Involved in the addition of a carboxymethylaminomethyl (cmnm) group at the wobble position (U34) of certain tRNAs, forming tRNA-cmnm(5)s(2)U34. In Mycoplasma mycoides subsp. mycoides SC (strain CCUG 32753 / NCTC 10114 / PG1), this protein is tRNA modification GTPase MnmE.